The primary structure comprises 951 residues: Valine--tRNA ligase (951 aa).

A 'HIGH' region motif is present at residues 42–52; it reads PNVTGSLHMGH. Residues 554 to 558 carry the 'KMSKS' region motif; the sequence is KMSKS. Lysine 557 lines the ATP pocket. A coiled-coil region spans residues 880–944; it reads AGLINKEDEL…AEAKAKLIEQ (65 aa).

This sequence belongs to the class-I aminoacyl-tRNA synthetase family. ValS type 1 subfamily. Monomer.

The protein resides in the cytoplasm. It catalyses the reaction tRNA(Val) + L-valine + ATP = L-valyl-tRNA(Val) + AMP + diphosphate. Catalyzes the attachment of valine to tRNA(Val). As ValRS can inadvertently accommodate and process structurally similar amino acids such as threonine, to avoid such errors, it has a 'posttransfer' editing activity that hydrolyzes mischarged Thr-tRNA(Val) in a tRNA-dependent manner. This chain is Valine--tRNA ligase, found in Escherichia coli O6:H1 (strain CFT073 / ATCC 700928 / UPEC).